A 244-amino-acid polypeptide reads, in one-letter code: 5-oxoprolinase subunit A (244 aa).

Belongs to the LamB/PxpA family. As to quaternary structure, forms a complex composed of PxpA, PxpB and PxpC.

The enzyme catalyses 5-oxo-L-proline + ATP + 2 H2O = L-glutamate + ADP + phosphate + H(+). Catalyzes the cleavage of 5-oxoproline to form L-glutamate coupled to the hydrolysis of ATP to ADP and inorganic phosphate. This is 5-oxoprolinase subunit A from Shigella boydii serotype 18 (strain CDC 3083-94 / BS512).